The chain runs to 946 residues: DNA primase (946 aa).

The interval 596-626 (RDTEEDEDGKEDKNNVPGNGVFQKTTSSVDT) is disordered. The segment covering 617–626 (FQKTTSSVDT) has biased composition (polar residues). The CHC2-type zinc finger occupies 881–920 (CLNYTHRNPQETVQVFIDLRTEHSYALWASLWSRCFTKKC).

The protein belongs to the herpesviridae DNA primase family. Associates with the helicase and the primase-associated factor to form the helicase-primase factor.

Its subcellular location is the host nucleus. Essential component of the helicase/primase complex. Unwinds the DNA at the replication forks and generates single-stranded DNA for both leading and lagging strand synthesis. The primase initiates primer synthesis and thereby produces large amount of short RNA primers on the lagging strand that the polymerase elongates using dNTPs. In Human cytomegalovirus (strain Merlin) (HHV-5), this protein is DNA primase (UL70).